The following is a 239-amino-acid chain: Lactate utilization protein A 2 (239 aa).

It belongs to the LutA/YkgE family.

Is involved in L-lactate degradation and allows cells to grow with lactate as the sole carbon source. This Bacillus mycoides (strain KBAB4) (Bacillus weihenstephanensis) protein is Lactate utilization protein A 2.